The following is a 722-amino-acid chain: A-type ATP synthase subunit I (722 aa).

Basic and acidic residues predominate over residues 309–321; the sequence is DYKPTGHDQHVPA. Positions 309–352 are disordered; it reads DYKPTGHDQHVPADDGADAATDGGTTASFDETDSPPVIQDNPGP. Over residues 326–335 the composition is skewed to low complexity; it reads DAATDGGTTA. 8 helical membrane-spanning segments follow: residues 384-404, 419-439, 474-494, 505-525, 554-574, 590-610, 639-659, and 662-682; these read FYGF…LGFW, GVAM…GEVF, LAAS…FGFV, AALE…WLFS, LAAA…AGFL, IAAV…LVFG, FMLF…MHMG, and GILI…ALGV.

The protein belongs to the V-ATPase 116 kDa subunit family. As to quaternary structure, has multiple subunits with at least A(3), B(3), C, D, E, F, H, I and proteolipid K(x).

The protein resides in the cell membrane. Its function is as follows. Component of the A-type ATP synthase that produces ATP from ADP in the presence of a proton gradient across the membrane. The polypeptide is A-type ATP synthase subunit I (Halobacterium salinarum (strain ATCC 700922 / JCM 11081 / NRC-1) (Halobacterium halobium)).